The chain runs to 419 residues: D-amino acid dehydrogenase (419 aa).

An FAD-binding site is contributed by 3-17; that stretch reads VIVLGSGVIGVASAY.

Belongs to the DadA oxidoreductase family. FAD is required as a cofactor.

The enzyme catalyses a D-alpha-amino acid + A + H2O = a 2-oxocarboxylate + AH2 + NH4(+). Its pathway is amino-acid degradation; D-alanine degradation; NH(3) and pyruvate from D-alanine: step 1/1. Its function is as follows. Oxidative deamination of D-amino acids. This chain is D-amino acid dehydrogenase, found in Acinetobacter baylyi (strain ATCC 33305 / BD413 / ADP1).